The sequence spans 318 residues: Pseudouridine-5'-phosphate glycosidase 1 (318 aa).

Glu-29 (proton donor) is an active-site residue. Residues Lys-90 and Val-110 each coordinate substrate. Position 142 (Asp-142) interacts with Mn(2+). Ser-144–Asp-146 contributes to the substrate binding site. Lys-163 functions as the Nucleophile in the catalytic mechanism.

Belongs to the pseudouridine-5'-phosphate glycosidase family. In terms of assembly, homotrimer. Requires Mn(2+) as cofactor.

It catalyses the reaction D-ribose 5-phosphate + uracil = psi-UMP + H2O. Catalyzes the reversible cleavage of pseudouridine 5'-phosphate (PsiMP) to ribose 5-phosphate and uracil. Functions biologically in the cleavage direction, as part of a pseudouridine degradation pathway. The polypeptide is Pseudouridine-5'-phosphate glycosidase 1 (Photorhabdus laumondii subsp. laumondii (strain DSM 15139 / CIP 105565 / TT01) (Photorhabdus luminescens subsp. laumondii)).